Consider the following 402-residue polypeptide: Triose phosphate/phosphate translocator, chloroplastic (402 aa).

The N-terminal 72 residues, 1-72 (MESRVLSRAT…KGASLLRPCP (72 aa)), are a transit peptide targeting the chloroplast. The Chloroplast intermembrane segment spans residues 73-96 (ATAGGNDSAGEEKVAPVGFFSRYP). The chain crosses the membrane as a helical span at residues 97 to 117 (ALTTGFFFFTWYFLNVIFNIL). Over 118–129 (NKKIYNYFPYPY) the chain is Lumenal. A helical membrane pass occupies residues 130 to 150 (FVSVIHLAVGVVYCLVSWTVG). Topologically, residues 151–207 (LPKRAPIDGNLLKLLIPVAVCHALGHVTSNVSFAAVAVSFTHTVKALEPFFNAAASQ) are chloroplast intermembrane. The chain crosses the membrane as a helical span at residues 208–228 (FILGQSIPITLWLSLAPVVIG). The Lumenal portion of the chain corresponds to 229 to 272 (VSMASLTELSFNWLGFISAMISNISFTYRSIYSKKAMTDMDSTN). Residues 273 to 292 (IYAYISIIALIVCIPPALII) form a helical membrane-spanning segment. Topologically, residues 293–370 (EGPTLLKTGF…IIFGNKISTQ (78 aa)) are chloroplast intermembrane. The helical transmembrane segment at 371–391 (TGIGTGIAIAGVALYSFIKAQ) threads the bilayer. Topologically, residues 392-402 (IEEEKRQAKAA) are lumenal.

Belongs to the TPT transporter family. TPT (TC 2.A.7.9) subfamily. As to quaternary structure, homodimer.

It is found in the plastid. It localises to the chloroplast membrane. Functionally, mediates the export of fixed carbons from the chloroplasts into the cytosol in the form of triose phosphates. The chain is Triose phosphate/phosphate translocator, chloroplastic from Pisum sativum (Garden pea).